Consider the following 240-residue polypeptide: MQIFPAIDLKNGQCVRLFQGDFSKKTVVNEDPIAQAKGFATDGATYLHIVDLDGALEGRPINLEVIQKMKTTAKIPVQVGGGIRSMAQVDYYLESGIDRVIIGSAALTDPDFLRAAVQKYGAKIAAGIDAKNGLVATRGWLDVSQVNYLDLAKRMEKVGVETIIYTDISRDGTLTGPNLEQMANLKEHVKVNLIASGGVSSRADLEALAKLGLYGAIAGKALYNRQISMSDIVEVEQIAY.

Residue aspartate 8 is the Proton acceptor of the active site. The active-site Proton donor is the aspartate 129.

It belongs to the HisA/HisF family.

Its subcellular location is the cytoplasm. The catalysed reaction is 1-(5-phospho-beta-D-ribosyl)-5-[(5-phospho-beta-D-ribosylamino)methylideneamino]imidazole-4-carboxamide = 5-[(5-phospho-1-deoxy-D-ribulos-1-ylimino)methylamino]-1-(5-phospho-beta-D-ribosyl)imidazole-4-carboxamide. It functions in the pathway amino-acid biosynthesis; L-histidine biosynthesis; L-histidine from 5-phospho-alpha-D-ribose 1-diphosphate: step 4/9. This Listeria monocytogenes serotype 4a (strain HCC23) protein is 1-(5-phosphoribosyl)-5-[(5-phosphoribosylamino)methylideneamino] imidazole-4-carboxamide isomerase.